Here is a 193-residue protein sequence, read N- to C-terminus: dCTP deaminase (193 aa).

Residues 110–115 (RSSLAR), Asp128, 136–138 (VLE), Tyr171, Lys178, and Gln182 contribute to the dCTP site. Glu138 serves as the catalytic Proton donor/acceptor. The tract at residues 169–193 (RPYNRRQDAKYRDQQGAVASRIDKD) is disordered.

Belongs to the dCTP deaminase family. As to quaternary structure, homotrimer.

The enzyme catalyses dCTP + H2O + H(+) = dUTP + NH4(+). Its pathway is pyrimidine metabolism; dUMP biosynthesis; dUMP from dCTP (dUTP route): step 1/2. Functionally, catalyzes the deamination of dCTP to dUTP. This chain is dCTP deaminase, found in Salmonella paratyphi B (strain ATCC BAA-1250 / SPB7).